A 493-amino-acid chain; its full sequence is Probable vesicular acetylcholine transporter-B (493 aa).

Residues 1-39 (MQSTGAPGLAQSAVLQLSAMGERSRELGGALREPERKRR) are Cytoplasmic-facing. Residues 40–60 (LLLVVVCVALLLDNMLYMVIV) form a helical membrane-spanning segment. The Lumenal, vesicle portion of the chain corresponds to 61 to 86 (PIIPDYLADLRGERGNSSADLDIQIG). The N-linked (GlcNAc...) asparagine glycan is linked to N76. A helical transmembrane segment spans residues 87–107 (VLFASKALLQLLVNPLSGTFI). Topologically, residues 108 to 113 (DRVGYD) are cytoplasmic. A helical transmembrane segment spans residues 114–134 (LPLLIGLLVMFLSTCIFAFAE). Over 135–143 (NYGTLFAAR) the chain is Lumenal, vesicle. The chain crosses the membrane as a helical span at residues 144–164 (SLQGLGSAFADTSGIAMIADK). Residues 165 to 174 (FTEEAERSRA) lie on the Cytoplasmic side of the membrane. A helical transmembrane segment spans residues 175 to 195 (LGIALAFISFGSLVAPPFGGI). The Lumenal, vesicle segment spans residues 196–203 (LYEFAGKR). The chain crosses the membrane as a helical span at residues 204 to 224 (VPFIVLACVCLADGVLLLTVV). Topologically, residues 225-247 (KPFSDRTRENMPVGTPIHRLMVD) are cytoplasmic. A helical transmembrane segment spans residues 248-268 (PYIAVVAGALTVCNIPLAFLE). The Lumenal, vesicle portion of the chain corresponds to 269-284 (PTIANWMESTMDASKW). A helical membrane pass occupies residues 285–305 (QMGLVWLPAFLPHVLGVYITV). At 306 to 315 (RLAARYPERQ) the chain is on the cytoplasmic side. A helical membrane pass occupies residues 316-336 (WFYGALGMVIIGASSCTVPAC). The Lumenal, vesicle segment spans residues 337-347 (KTFGELVFPLC). A helical membrane pass occupies residues 348-368 (GICFGIALVDTALLPTLAFLV). Topologically, residues 369–378 (DVRHVSVYGS) are cytoplasmic. Residues 379–399 (VYAIADISYSVAYAMGPVVAG) form a helical membrane-spanning segment. Topologically, residues 400 to 406 (QIVHNLG) are lumenal, vesicle. Residues 407–427 (FVQLNLGMGLVNVLYAPALLL) traverse the membrane as a helical segment. The Cytoplasmic portion of the chain corresponds to 428-493 (LRPVCQIKPS…EEEESGPESA (66 aa)). The disordered stretch occupies residues 467 to 493 (GLSAGAGTEHGLRGRSEEEEESGPESA). Residues 483-493 (EEEEESGPESA) are compositionally biased toward acidic residues.

This sequence belongs to the major facilitator superfamily. Vesicular transporter family.

The protein resides in the membrane. In terms of biological role, involved in acetylcholine transport into synaptic vesicles. The chain is Probable vesicular acetylcholine transporter-B (slc18a3b) from Danio rerio (Zebrafish).